The primary structure comprises 209 residues: Uracil phosphoribosyltransferase (209 aa).

5-phospho-alpha-D-ribose 1-diphosphate is bound by residues arginine 79, arginine 104, and 131–139 (DPMLATGGS). Residues isoleucine 194 and 199–201 (GDA) contribute to the uracil site. Aspartate 200 lines the 5-phospho-alpha-D-ribose 1-diphosphate pocket.

The protein belongs to the UPRTase family. Requires Mg(2+) as cofactor.

It carries out the reaction UMP + diphosphate = 5-phospho-alpha-D-ribose 1-diphosphate + uracil. The protein operates within pyrimidine metabolism; UMP biosynthesis via salvage pathway; UMP from uracil: step 1/1. With respect to regulation, allosterically activated by GTP. Functionally, catalyzes the conversion of uracil and 5-phospho-alpha-D-ribose 1-diphosphate (PRPP) to UMP and diphosphate. The protein is Uracil phosphoribosyltransferase of Alkaliphilus oremlandii (strain OhILAs) (Clostridium oremlandii (strain OhILAs)).